Reading from the N-terminus, the 408-residue chain is Putative transporter AmpG 2 (408 aa).

Helical transmembrane passes span 11–31 (IFNILFILIISFPGGLIYLLT), 49–69 (IGLFGLVNFIYILKFLWGPLL), 84–104 (YCLVITLINCIVCVYVLTSFN), 110–130 (TPFVLCLIVLAFFSSIYDMLI), 154–174 (FRIGILISGSGALYLSTIISW), 177–197 (VYRTMAILCIPSLLLIIFYPL), 224–244 (WIVIISFMLLYRLQDSFLSIM), 261–281 (IGYKAFGMCAAIFGGVIGGFL), 294–311 (VLIYHALSSLSFIYLYFL), 315–337 (IISLYIAVFCQEFTKGLTMSPFF), 353–373 (IALITSITNVGTILIGSISGY), and 382–402 (YFFIVAGLCFIPAYILILYLP).

It belongs to the major facilitator superfamily.

It localises to the cell inner membrane. In Rickettsia typhi (strain ATCC VR-144 / Wilmington), this protein is Putative transporter AmpG 2 (ampG2).